Reading from the N-terminus, the 55-residue chain is Large ribosomal subunit protein bL33 (55 aa).

The protein belongs to the bacterial ribosomal protein bL33 family.

In Alcanivorax borkumensis (strain ATCC 700651 / DSM 11573 / NCIMB 13689 / SK2), this protein is Large ribosomal subunit protein bL33.